The chain runs to 613 residues: Phostensin (613 aa).

The span at 18–33 (EEASVRGREKAERERL) shows a compositional bias: basic and acidic residues. 2 disordered regions span residues 18-231 (EEAS…SAYQ) and 266-500 (GEER…AVPG). Phosphoserine is present on residues Ser-54, Ser-125, Ser-133, Ser-175, and Ser-195. Composition is skewed to basic and acidic residues over residues 104–154 (RSEE…ERRL) and 167–191 (LEARDWRQSPGEVGDRSSRLSEAWK). Thr-199 bears the Phosphothreonine mark. Positions 199–221 (TPERSLRLAESREQSPRRKEVES) are enriched in basic and acidic residues. Ser-224 carries the post-translational modification Phosphoserine. Positions 266–282 (GEERQDYSEECGRKEEW) are enriched in basic and acidic residues. The segment covering 295 to 309 (LSETLTREAQGNSSA) has biased composition (polar residues). 3 stretches are compositionally biased toward basic and acidic residues: residues 314-327 (AEQRPVEDGERGMK), 340-350 (KAREWTPRDIE), and 357-366 (EPPESAEKLL). Phosphoserine occurs at positions 368 and 432. Over residues 424–446 (QPPPPAPLSPPPPAPTAPQPPGD) the composition is skewed to pro residues. At Lys-457 the chain carries N6-acetyllysine. Low complexity predominate over residues 476-499 (PRRSVPPATPATPTSPATVDAAVP). 2 positions are modified to phosphoserine: Ser-490 and Ser-530. The disordered stretch occupies residues 552–595 (QYPSESSVLEELGPEPEVPSAPNPPAAQPDDEEDEEELLLLQPE). Residues 567–578 (PEVPSAPNPPAA) show a composition bias toward pro residues. The segment covering 580 to 589 (PDDEEDEEEL) has biased composition (acidic residues).

In terms of assembly, interacts with Protein phosphatase 1 (PP1). Isoform 4 is predominantly expressed in leukocytes and spleen.

It is found in the cytoplasm. The protein localises to the cytoskeleton. Its function is as follows. May target protein phosphatase 1 to F-actin cytoskeleton. This chain is Phostensin (PPP1R18), found in Homo sapiens (Human).